A 311-amino-acid polypeptide reads, in one-letter code: Biotin synthase (311 aa).

Residues 32–258 (NGVQFCQLLN…LFPLSRIRLA (227 aa)) enclose the Radical SAM core domain. [4Fe-4S] cluster contacts are provided by Cys47, Cys51, and Cys54. [2Fe-2S] cluster is bound by residues Cys91, Cys124, Cys184, and Arg256.

The protein belongs to the radical SAM superfamily. Biotin synthase family. As to quaternary structure, homodimer. [4Fe-4S] cluster serves as cofactor. It depends on [2Fe-2S] cluster as a cofactor.

It carries out the reaction (4R,5S)-dethiobiotin + (sulfur carrier)-SH + 2 reduced [2Fe-2S]-[ferredoxin] + 2 S-adenosyl-L-methionine = (sulfur carrier)-H + biotin + 2 5'-deoxyadenosine + 2 L-methionine + 2 oxidized [2Fe-2S]-[ferredoxin]. It participates in cofactor biosynthesis; biotin biosynthesis; biotin from 7,8-diaminononanoate: step 2/2. Catalyzes the conversion of dethiobiotin (DTB) to biotin by the insertion of a sulfur atom into dethiobiotin via a radical-based mechanism. In Methylacidiphilum infernorum (isolate V4) (Methylokorus infernorum (strain V4)), this protein is Biotin synthase.